Here is a 218-residue protein sequence, read N- to C-terminus: 7-cyano-7-deazaguanine synthase (218 aa).

Residue 9–19 coordinates ATP; the sequence is FSGGMDSFTVL. Zn(2+) contacts are provided by Cys-185, Cys-193, Cys-196, and Cys-199.

This sequence belongs to the QueC family. Zn(2+) serves as cofactor.

The catalysed reaction is 7-carboxy-7-deazaguanine + NH4(+) + ATP = 7-cyano-7-deazaguanine + ADP + phosphate + H2O + H(+). It functions in the pathway purine metabolism; 7-cyano-7-deazaguanine biosynthesis. Its function is as follows. Catalyzes the ATP-dependent conversion of 7-carboxy-7-deazaguanine (CDG) to 7-cyano-7-deazaguanine (preQ(0)). The polypeptide is 7-cyano-7-deazaguanine synthase (Pseudoalteromonas atlantica (strain T6c / ATCC BAA-1087)).